Consider the following 290-residue polypeptide: MRSHILGRIELDQERLGRDLEYLATVPTVEEEYDEFSNGFWKNIPLYNASGGSEDRLYRDLEGSPAQPTKHAEQVPYLNEIITTVYNGERLQMARTRNLKNAVVIPHRDFVELDRELDQYFRTHLMLEDSPLAFHSDDDTVIHMRAGEIWFLDAAAVHSAVNFAEFSRQSLCVDLAFDGAFDEKEAFADATVYAPNLSPDVRERKPFTKEREAGILALSGVIGRENFRDILFLLSKVHYTYDVHPGETFEWLVSVSKGAGDDKMVEKAERIRDFAIGARALGERFSLTTW.

3 residues coordinate Fe cation: histidine 107, aspartate 109, and histidine 158. Arginine 168 provides a ligand contact to 2-oxoglutarate.

It belongs to the L-proline cis-4-/cis-3-hydroxylase family. As to quaternary structure, homodimer. The cofactor is Fe(2+).

The catalysed reaction is L-proline + 2-oxoglutarate + O2 = cis-3-hydroxy-L-proline + succinate + CO2. Inhibited by metal ions such as Co(2+), Zn(2+), Ni(2+) or Cu(2+). Is also inhibited by EDTA in vitro. Unlike the procollagen-proline cis-3- and trans-4-hydroxylases from mammals, does not necessarily require L-ascorbate for activity although it does increase the activity of the enzyme. Its function is as follows. Dioxygenase that catalyzes the 2-oxoglutarate-dependent selective hydroxylation of free L-proline to cis-3-hydroxy-L-proline (cis-3-Hyp). D-proline, trans-4-hydroxy-L-proline, cis-4-hydroxy-L-proline, cis-4-hydroxy-D-proline, and 3,4-dehydro-DL-proline are not substrates. The sequence is that of L-proline cis-3-hydroxylase 1 from Streptomyces sp.